The sequence spans 87 residues: Large ribosomal subunit protein bL27 (87 aa).

It belongs to the bacterial ribosomal protein bL27 family.

This chain is Large ribosomal subunit protein bL27, found in Wigglesworthia glossinidia brevipalpis.